The chain runs to 563 residues: Chaperonin GroEL 1 (563 aa).

ATP contacts are provided by residues 29 to 32, 86 to 90, G413, 476 to 478, and D492; these read TIGP, DGTTT, and NAA. Positions 520–545 are disordered; it reads DKPEPPSPAGGEGGGDPMGGMGGMGG. A compositionally biased stretch (gly residues) spans 529-545; it reads GGEGGGDPMGGMGGMGG.

This sequence belongs to the chaperonin (HSP60) family. Forms a cylinder of 14 subunits composed of two heptameric rings stacked back-to-back. Interacts with the co-chaperonin GroES.

Its subcellular location is the cytoplasm. It carries out the reaction ATP + H2O + a folded polypeptide = ADP + phosphate + an unfolded polypeptide.. In terms of biological role, together with its co-chaperonin GroES, plays an essential role in assisting protein folding. The GroEL-GroES system forms a nano-cage that allows encapsulation of the non-native substrate proteins and provides a physical environment optimized to promote and accelerate protein folding. The chain is Chaperonin GroEL 1 from Prochlorococcus marinus (strain SARG / CCMP1375 / SS120).